The chain runs to 543 residues: Probable protein kinase UbiB (543 aa).

The Protein kinase domain occupies 123 to 501 (DFDSQALASA…GSRQGRARYL (379 aa)). ATP is bound by residues 129-137 (LASASIAQV) and Lys-152. The active-site Proton acceptor is Asp-287. Residues 517-537 (MVNIALWPIGLYVAGGVIWLA) traverse the membrane as a helical segment.

The protein belongs to the ABC1 family. UbiB subfamily.

The protein localises to the cell inner membrane. It participates in cofactor biosynthesis; ubiquinone biosynthesis [regulation]. Its function is as follows. Is probably a protein kinase regulator of UbiI activity which is involved in aerobic coenzyme Q (ubiquinone) biosynthesis. This chain is Probable protein kinase UbiB, found in Edwardsiella ictaluri (strain 93-146).